Here is a 1036-residue protein sequence, read N- to C-terminus: uncharacterized protein (1036 aa).

The N-terminal stretch at 1-24 (MKRVGLIGVIMAALLVISATPVMA) is a signal peptide. Residues 1011–1033 (GGGVPGFEAVFAIAGLLAVAYLL) traverse the membrane as a helical segment.

Its subcellular location is the membrane. This is an uncharacterized protein from Archaeoglobus fulgidus (strain ATCC 49558 / DSM 4304 / JCM 9628 / NBRC 100126 / VC-16).